The primary structure comprises 935 residues: Auxin response factor 6 (935 aa).

The segment at residues 129 to 231 (FCKTLTASDT…QLLLGIRRAN (103 aa)) is a DNA-binding region (TF-B3). Disordered regions lie at residues 536–624 (QAYL…PLHT) and 645–714 (SAMT…SASD). 2 stretches are compositionally biased toward low complexity: residues 546 to 565 (QPQS…QQQQ) and 573 to 582 (SASSAAVVSA). 2 stretches are compositionally biased toward polar residues: residues 583-624 (MSQF…PLHT) and 661-689 (SSFQ…SNVP). Positions 796–880 (NTFVKVYKSG…WCIKILSPQE (85 aa)) constitute a PB1 domain. The span at 896-909 (PSSNNVDKLPSNGN) shows a compositional bias: polar residues. Positions 896-917 (PSSNNVDKLPSNGNCDDFGNRS) are disordered.

The protein belongs to the ARF family. Homodimers and heterodimers. In terms of tissue distribution, expressed in the whole plant.

The protein localises to the nucleus. In terms of biological role, auxin response factors (ARFs) are transcriptional factors that bind specifically to the DNA sequence 5'-TGTCTC-3' found in the auxin-responsive promoter elements (AuxREs). Seems to act as transcriptional activator. Formation of heterodimers with Aux/IAA proteins may alter their ability to modulate early auxin response genes expression. Regulates both stamen and gynoecium maturation. Promotes jasmonic acid production. Partially redundant with ARF8. The polypeptide is Auxin response factor 6 (ARF6) (Arabidopsis thaliana (Mouse-ear cress)).